Consider the following 199-residue polypeptide: Protein-L-isoaspartate O-methyltransferase (199 aa).

The active site involves serine 51.

It belongs to the methyltransferase superfamily. L-isoaspartyl/D-aspartyl protein methyltransferase family.

The protein localises to the cytoplasm. It catalyses the reaction [protein]-L-isoaspartate + S-adenosyl-L-methionine = [protein]-L-isoaspartate alpha-methyl ester + S-adenosyl-L-homocysteine. Catalyzes the methyl esterification of L-isoaspartyl residues in peptides and proteins that result from spontaneous decomposition of normal L-aspartyl and L-asparaginyl residues. It plays a role in the repair and/or degradation of damaged proteins. This Fervidobacterium nodosum (strain ATCC 35602 / DSM 5306 / Rt17-B1) protein is Protein-L-isoaspartate O-methyltransferase.